A 141-amino-acid polypeptide reads, in one-letter code: MTRFWIGVVSKEHVLRGVEGGFCQVCHGKKAPLNRMKKGDYLLYYSPKYQLNGQEKLQAFTAVGKILDDTAYQVEMFEGFVPFRRDVSYYQPVKDCPIEQVRQHPQWRQYASQIRYGHFEVSKDFFLYVFEQMKLDSPANQ.

It belongs to the UPF0310 family.

The protein is UPF0310 protein SSA_0254 of Streptococcus sanguinis (strain SK36).